A 369-amino-acid polypeptide reads, in one-letter code: Glutamate 5-kinase (369 aa).

ATP is bound at residue Lys-9. Substrate is bound by residues Ser-49, Asp-136, and Asn-148. Residues 168–169 (TD) and 210–216 (TGGMLTK) each bind ATP. One can recognise a PUA domain in the interval 275 to 355 (RGSVYVDEGA…KGVFIHRDDW (81 aa)).

It belongs to the glutamate 5-kinase family.

The protein resides in the cytoplasm. The enzyme catalyses L-glutamate + ATP = L-glutamyl 5-phosphate + ADP. Its pathway is amino-acid biosynthesis; L-proline biosynthesis; L-glutamate 5-semialdehyde from L-glutamate: step 1/2. In terms of biological role, catalyzes the transfer of a phosphate group to glutamate to form L-glutamate 5-phosphate. This Neisseria meningitidis serogroup C / serotype 2a (strain ATCC 700532 / DSM 15464 / FAM18) protein is Glutamate 5-kinase.